Here is a 671-residue protein sequence, read N- to C-terminus: Anti-sigma-I factor RsgI2 (671 aa).

Topologically, residues 1 to 57 (MSHYTGIILKLESDRAIVLTDGLDFMELKLKPGMQRGQHVIFDESDLYSAGLITRYK) are cytoplasmic. The 48-residue stretch at 4-51 (YTGIILKLESDRAIVLTDGLDFMELKLKPGMQRGQHVIFDESDLYSAG) folds into the RsgI N-terminal anti-sigma domain. A helical membrane pass occupies residues 58–78 (SIIMPFSAFAAAAAVFLVILF). Topologically, residues 79–671 (SLRFVSISQE…SGTLYWGIEP (593 aa)) are extracellular. 2 disordered regions span residues 290–323 (TEAQPVDIPKSSPTPASFTAHVPTPPKTPSIPHT) and 359–505 (PVPV…APTE). The span at 359–379 (PVPVSTPKPVSTPAYSSTPTP) shows a compositional bias: low complexity. The segment covering 380 to 400 (ESTPVPVSTPKPASTPTPAST) has biased composition (pro residues). The segment covering 401–425 (PKPVSTPTHVSTPKPISTPTSTPRP) has biased composition (low complexity). Pro residues predominate over residues 426–446 (ASTPKPTSTPTPESTPKPTST). Residues 447-491 (PAPVSTPTSTPIPTYTSTPASTPIPAYTSTPTSIPTLTPATSPAP) are compositionally biased toward low complexity. Over residues 492–502 (TSSPTPIPSPA) the composition is skewed to pro residues. The CBM3 domain occupies 508–671 (LLTKIELQAY…SGTLYWGIEP (164 aa)). Residues Thr554, Asp556, Asp637, Ser640, and Asp641 each contribute to the Ca(2+) site.

Interacts (via RsgI N-terminal anti-sigma domain) with SigI2.

The protein resides in the cell membrane. Anti-sigma factor for SigI2. Negatively regulates SigI2 activity through direct interaction. Binding of the polysaccharide substrate to the extracellular C-terminal sensing domain of RsgI2 may induce a conformational change in its N-terminal cytoplasmic region, leading to the release and activation of SigI2. The sequence is that of Anti-sigma-I factor RsgI2 from Acetivibrio thermocellus (strain ATCC 27405 / DSM 1237 / JCM 9322 / NBRC 103400 / NCIMB 10682 / NRRL B-4536 / VPI 7372) (Clostridium thermocellum).